Reading from the N-terminus, the 252-residue chain is Ureidoacrylate amidohydrolase RutB (252 aa).

Positions 1 to 14 are enriched in polar residues; sequence MSTPARNTTLTSNT. Positions 1–31 are disordered; that stretch reads MSTPARNTTLTSNTPAGAPRLPGAPAPQVLP. Positions 15-27 are enriched in low complexity; it reads PAGAPRLPGAPAP. Asp-50 acts as the Proton acceptor in catalysis. The active site involves Lys-159. Cys-192 serves as the catalytic Nucleophile.

Belongs to the isochorismatase family. RutB subfamily.

The catalysed reaction is (Z)-3-ureidoacrylate + H2O + H(+) = (Z)-3-aminoacrylate + NH4(+) + CO2. It catalyses the reaction (Z)-3-ureidoacrylate + H2O = (Z)-3-aminoacrylate + carbamate + H(+). The enzyme catalyses (Z)-2-methylureidoacrylate + H2O + H(+) = (Z)-2-methylaminoacrylate + NH4(+) + CO2. Hydrolyzes ureidoacrylate to form aminoacrylate and carbamate. The carbamate hydrolyzes spontaneously, thereby releasing one of the nitrogen atoms of the pyrimidine ring as ammonia and one of its carbon atoms as CO2. The protein is Ureidoacrylate amidohydrolase RutB of Variovorax paradoxus (strain S110).